Here is a 294-residue protein sequence, read N- to C-terminus: tRNA dimethylallyltransferase (294 aa).

11–18 is an ATP binding site; it reads GPTAVGKT. Residue 13-18 coordinates substrate; that stretch reads TAVGKT. The interval 36–39 is interaction with substrate tRNA; that stretch reads DSQQ.

This sequence belongs to the IPP transferase family. In terms of assembly, monomer. The cofactor is Mg(2+).

It carries out the reaction adenosine(37) in tRNA + dimethylallyl diphosphate = N(6)-dimethylallyladenosine(37) in tRNA + diphosphate. In terms of biological role, catalyzes the transfer of a dimethylallyl group onto the adenine at position 37 in tRNAs that read codons beginning with uridine, leading to the formation of N6-(dimethylallyl)adenosine (i(6)A). This chain is tRNA dimethylallyltransferase, found in Lactococcus lactis subsp. lactis (strain IL1403) (Streptococcus lactis).